Here is a 412-residue protein sequence, read N- to C-terminus: Double C2-like domain-containing protein beta (412 aa).

A negatively regulates targeting to plasma membrane region spans residues 1–36 (MTLRRRGEKATISIQEHMAIDVCPGPIRPIKQISDY). A mediates interaction with DYNLT1 region spans residues 1 to 90 (MTLRRRGEKA…EDVDQLFGAY (90 aa)). The disordered stretch occupies residues 38–123 (PRFPRGLPPD…PDADGYESDD (86 aa)). Low complexity predominate over residues 49 to 70 (GPRAAAPPDAPARPAVAGAGRR). The span at 95–108 (GPSPGPSPARPPAK) shows a compositional bias: pro residues. Residues 112-123 (DEPDADGYESDD) are compositionally biased toward acidic residues. 2 C2 domains span residues 126–250 (ALGT…SICL) and 266–399 (ERGR…ERWH). Ca(2+) contacts are provided by Asp157, Asp163, Asp218, Asp220, Asp297, Asp303, Asp357, Asp359, and Asp365. Residues 257 to 375 (DKTEDKSLEE…FIGGVVLGIH (119 aa)) are mediates interaction with STXBP3. Phosphoserine is present on Ser411.

In terms of assembly, interacts with the SNARE (soluble N-ethylmaleimide-sensitive factor attached protein receptor) complex composed of SNAP25, STX1A and VAMP2; the interaction is calcium-dependent and competitive with SYT1. Interacts with STX4; the interaction is calcium-dependent, increased by insulin and glucose, and mediates vesicle fusion with plasma membrane in pancreatic cells and adipocytes. Interacts with STXBP3; the interaction is direct, occurs at the cell membrane and regulates glucose-stimulated insulin secretion. May interact with UNC13A; the interaction mediates targeting to the plasma membrane. Interacts with cytoplasmic dynein light chain DYNLT1. Requires Ca(2+) as cofactor. In terms of tissue distribution, widely expressed with highest levels in brain and kidney. Expressed in pancreatic islet cells (at protein level).

It is found in the cytoplasm. It localises to the cytoplasmic granule. The protein resides in the cell membrane. In terms of biological role, calcium sensor which positively regulates SNARE-dependent fusion of vesicles with membranes. Binds phospholipids in a calcium-dependent manner and may act at the priming stage of fusion by modifying membrane curvature to stimulate fusion. Involved in calcium-triggered exocytosis in chromaffin cells and calcium-dependent spontaneous release of neurotransmitter in absence of action potentials in neuronal cells. Involved both in glucose-stimulated insulin secretion in pancreatic cells and insulin-dependent GLUT4 transport to the plasma membrane in adipocytes. The polypeptide is Double C2-like domain-containing protein beta (Homo sapiens (Human)).